The primary structure comprises 77 residues: Translation initiation factor IF-1, chloroplastic (77 aa).

The 71-residue stretch at M1–R71 folds into the S1-like domain.

Belongs to the IF-1 family. In terms of assembly, component of the 30S ribosomal translation pre-initiation complex which assembles on the 30S ribosome in the order IF-2 and IF-3, IF-1 and N-formylmethionyl-tRNA(fMet); mRNA recruitment can occur at any time during PIC assembly.

It is found in the plastid. It localises to the chloroplast. Its function is as follows. One of the essential components for the initiation of protein synthesis. Stabilizes the binding of IF-2 and IF-3 on the 30S subunit to which N-formylmethionyl-tRNA(fMet) subsequently binds. Helps modulate mRNA selection, yielding the 30S pre-initiation complex (PIC). Upon addition of the 50S ribosomal subunit IF-1, IF-2 and IF-3 are released leaving the mature 70S translation initiation complex. The protein is Translation initiation factor IF-1, chloroplastic of Hedera helix (English ivy).